A 91-amino-acid chain; its full sequence is Acyl-CoA-binding domain-containing protein 2 (91 aa).

Positions 3–88 (LQEEFEEFAE…VKQLLEEASA (86 aa)) constitute an ACB domain. An acyl-CoA is bound by residues Lys15, 30–34 (YGLYK), Lys52, Lys56, and Tyr75.

This sequence belongs to the ACBP family. As to expression, highly expressed in leaves. Expressed at low levels in roots and seeds.

It localises to the cytoplasm. Its subcellular location is the cytosol. Binds medium- and long-chain acyl-CoA esters with high affinity. Can interact in vitro with linolenoyl-CoA. Binds palmitoyl-CoA and linoleoyl-CoA in vitro. Binds phosphatidic acid (PA) and phosphatidylcholine (PC) in vitro. May play a role in the biosynthesis of phospholipids. The polypeptide is Acyl-CoA-binding domain-containing protein 2 (Oryza sativa subsp. japonica (Rice)).